The primary structure comprises 425 residues: Neuromedin-U receptor 1 (425 aa).

Residues 1–59 (MTPPCLNCSFFPGQLSPNASTGLLSCNDSEFKEHFDLEDLNLTHEDLRLKYLGPQQVKQ) are Extracellular-facing. A glycan (N-linked (GlcNAc...) asparagine) is linked at asparagine 41. The chain crosses the membrane as a helical span at residues 60–80 (FLPICVTYLLIFVVGTLGNGL). Residues 81 to 96 (TCTVILRQKAMHTPTN) lie on the Cytoplasmic side of the membrane. Residues 97-117 (FYLFSLAVSDLLVLLVGLPLE) form a helical membrane-spanning segment. The Extracellular portion of the chain corresponds to 118 to 137 (LYEMQHNYPFQLGAGGCYFR). Cysteines 134 and 219 form a disulfide. Residues 138 to 158 (ILLLETVCLASVLNVTALSVE) form a helical membrane-spanning segment. At 159-181 (RYVAVVHPLQAKSVMTRTHVRRM) the chain is on the cytoplasmic side. A helical membrane pass occupies residues 182–202 (LGAIWVFAILFSLPNTSLHGL). Residues 203 to 235 (SPLYVPCRGPVPDSVTCTLVRPQFFYKLVIQTT) lie on the Extracellular side of the membrane. The helical transmembrane segment at 236-256 (ILLFFCLPMVTISVLYLLIGL) threads the bilayer. Residues 257 to 294 (RLRRERILLQEEVKGRISAAARQASHRSIQLRDRERRQ) lie on the Cytoplasmic side of the membrane. The chain crosses the membrane as a helical span at residues 295-315 (VTKMLIALVIVFGTCWVPFHA). Residues 316–331 (DRLMWSMVSHWTDGLR) lie on the Extracellular side of the membrane. A helical transmembrane segment spans residues 332–352 (LAFQSVHLASGVFLYLGSAAN). Residues 353–425 (PVLYNLMSTR…GCEQETDPPE (73 aa)) lie on the Cytoplasmic side of the membrane. The tract at residues 406–425 (DVPLAENRDPGCEQETDPPE) is disordered.

The protein belongs to the G-protein coupled receptor 1 family. As to expression, highly expressed in the small intestine and lung. Low expression in the central nervous system.

The protein localises to the cell membrane. Its function is as follows. Receptor for the neuromedin-U and neuromedin-S neuropeptides. The sequence is that of Neuromedin-U receptor 1 (Nmur1) from Rattus norvegicus (Rat).